The following is a 254-amino-acid chain: ATP-dependent L-serine kinase SbnI (254 aa).

Residue E20 is part of the active site. Position 33 (S33) interacts with ADP. Residue I57 participates in O-phospho-L-serine binding. Positions 58, 59, 61, and 62 each coordinate ADP. Residues G59 and H61 each coordinate O-phospho-L-serine. 2 residues coordinate O-phospho-L-serine: W98 and R229.

Forms dimers and tetramers in solution. Predominantly forms dimers. Dimerization/oligomerization is not essential for kinase activity.

The enzyme catalyses L-serine + ATP = O-phospho-L-serine + ADP + H(+). The protein operates within siderophore biosynthesis. Binds heme and heme binding inhibits DNA binding. Its function is as follows. Free serine kinase that uses ATP to phosphorylate L-serine to yield O-phospho-L-serine and ADP. O-phospho-L-serine serves as a substrate for SbnA and is a precursor for staphyloferrin B biosynthesis. Is also a DNA-binding regulatory protein that senses heme to control gene expression for siderophore biosynthesis. Binds to DNA within the sbnC coding region and is required for expression of genes in the sbn operon from sbnD onward. This Staphylococcus aureus (strain NCTC 8325 / PS 47) protein is ATP-dependent L-serine kinase SbnI.